Reading from the N-terminus, the 464-residue chain is UDP-N-acetylmuramoylalanine--D-glutamate ligase (464 aa).

112-118 (GTDGKTT) is an ATP binding site.

It belongs to the MurCDEF family.

It is found in the cytoplasm. The catalysed reaction is UDP-N-acetyl-alpha-D-muramoyl-L-alanine + D-glutamate + ATP = UDP-N-acetyl-alpha-D-muramoyl-L-alanyl-D-glutamate + ADP + phosphate + H(+). The protein operates within cell wall biogenesis; peptidoglycan biosynthesis. Functionally, cell wall formation. Catalyzes the addition of glutamate to the nucleotide precursor UDP-N-acetylmuramoyl-L-alanine (UMA). This chain is UDP-N-acetylmuramoylalanine--D-glutamate ligase, found in Chlorobium phaeobacteroides (strain DSM 266 / SMG 266 / 2430).